A 65-amino-acid chain; its full sequence is Small, acid-soluble spore protein H 3 (65 aa).

It belongs to the SspH family.

It is found in the spore core. This is Small, acid-soluble spore protein H 3 from Geobacillus thermodenitrificans (strain NG80-2).